The primary structure comprises 503 residues: Cytochrome P450 11B1, mitochondrial (503 aa).

Residues 1-24 (MAIWAKAEAWLAGPWLALNRARTL) constitute a mitochondrion transit peptide. A heme-binding site is contributed by Cys-450.

This sequence belongs to the cytochrome P450 family. Heme serves as cofactor.

The protein resides in the mitochondrion inner membrane. The enzyme catalyses a steroid + 2 reduced [adrenodoxin] + O2 + 2 H(+) = an 11beta-hydroxysteroid + 2 oxidized [adrenodoxin] + H2O. It catalyses the reaction 11-deoxycortisol + 2 reduced [adrenodoxin] + O2 + 2 H(+) = cortisol + 2 oxidized [adrenodoxin] + H2O. It carries out the reaction 21-hydroxyprogesterone + 2 reduced [adrenodoxin] + O2 + 2 H(+) = corticosterone + 2 oxidized [adrenodoxin] + H2O. The catalysed reaction is corticosterone + 2 reduced [adrenodoxin] + O2 + 2 H(+) = 18-hydroxycorticosterone + 2 oxidized [adrenodoxin] + H2O. The enzyme catalyses 18-hydroxycorticosterone + 2 reduced [adrenodoxin] + O2 + 2 H(+) = aldosterone + 2 oxidized [adrenodoxin] + 2 H2O. It catalyses the reaction 21-hydroxyprogesterone + 2 reduced [adrenodoxin] + O2 + 2 H(+) = 19-hydroxy-11-deoxycorticosterone + 2 oxidized [adrenodoxin] + H2O. It carries out the reaction 19-hydroxy-11-deoxycorticosterone + 2 reduced [adrenodoxin] + O2 + 2 H(+) = 19-oxo-11-deoxycorticosterone + 2 oxidized [adrenodoxin] + 2 H2O. The protein operates within steroid biosynthesis; glucocorticoid biosynthesis. It functions in the pathway steroid hormone biosynthesis. A cytochrome P450 monooxygenase that catalyzes the biosynthesis of aldosterone and other adrenal corticoids. Differing from other species (such as human, rat and mice), it is able to catalyze three sequential oxidative reactions of 11-deoxycorticosterone (21-hydroxyprogesterone), namely 11-beta hydroxylation, followed by two successive oxidations at C18 yielding 18-hydroxy and then 18-oxo intermediates, and ending with the formation of aldosterone. Steroid 11beta, 18- and 19-hydroxylase. Mechanistically, uses molecular oxygen inserting one oxygen atom into a substrate and reducing the second into a water molecule. Two electrons are provided by NADPH via a two-protein mitochondrial transfer system comprising flavoprotein FDXR (adrenodoxin/ferredoxin reductase) and nonheme iron-sulfur protein FDX1 or FDX2 (adrenodoxin/ferredoxin). In Sus scrofa (Pig), this protein is Cytochrome P450 11B1, mitochondrial (CYP11B1).